The sequence spans 237 residues: Phosphoribosylaminoimidazole-succinocarboxamide synthase (237 aa).

It belongs to the SAICAR synthetase family.

The catalysed reaction is 5-amino-1-(5-phospho-D-ribosyl)imidazole-4-carboxylate + L-aspartate + ATP = (2S)-2-[5-amino-1-(5-phospho-beta-D-ribosyl)imidazole-4-carboxamido]succinate + ADP + phosphate + 2 H(+). The protein operates within purine metabolism; IMP biosynthesis via de novo pathway; 5-amino-1-(5-phospho-D-ribosyl)imidazole-4-carboxamide from 5-amino-1-(5-phospho-D-ribosyl)imidazole-4-carboxylate: step 1/2. This is Phosphoribosylaminoimidazole-succinocarboxamide synthase from Fusobacterium nucleatum subsp. nucleatum (strain ATCC 25586 / DSM 15643 / BCRC 10681 / CIP 101130 / JCM 8532 / KCTC 2640 / LMG 13131 / VPI 4355).